Here is a 481-residue protein sequence, read N- to C-terminus: UDP-N-acetylmuramoyl-L-alanyl-D-glutamate--L-lysine ligase (481 aa).

Residue serine 42 participates in UDP-N-acetyl-alpha-D-muramoyl-L-alanyl-D-glutamate binding. 118 to 124 provides a ligand contact to ATP; it reads GTKGKTT. UDP-N-acetyl-alpha-D-muramoyl-L-alanyl-D-glutamate-binding positions include glutamine 158, 160–161, serine 187, and arginine 195; that span reads TT. At lysine 229 the chain carries N6-carboxylysine. The L-lysine recognition motif motif lies at 404-407; sequence DDPN.

Belongs to the MurCDEF family. MurE subfamily. Post-translationally, carboxylation is probably crucial for Mg(2+) binding and, consequently, for the gamma-phosphate positioning of ATP.

The protein localises to the cytoplasm. It carries out the reaction UDP-N-acetyl-alpha-D-muramoyl-L-alanyl-D-glutamate + L-lysine + ATP = UDP-N-acetyl-alpha-D-muramoyl-L-alanyl-gamma-D-glutamyl-L-lysine + ADP + phosphate + H(+). The protein operates within cell wall biogenesis; peptidoglycan biosynthesis. Functionally, catalyzes the addition of L-lysine to the nucleotide precursor UDP-N-acetylmuramoyl-L-alanyl-D-glutamate (UMAG) in the biosynthesis of bacterial cell-wall peptidoglycan. The sequence is that of UDP-N-acetylmuramoyl-L-alanyl-D-glutamate--L-lysine ligase from Streptococcus pyogenes serotype M4 (strain MGAS10750).